Here is a 250-residue protein sequence, read N- to C-terminus: Pyrroloquinoline-quinone synthase (250 aa).

This sequence belongs to the PqqC family.

The enzyme catalyses 6-(2-amino-2-carboxyethyl)-7,8-dioxo-1,2,3,4,7,8-hexahydroquinoline-2,4-dicarboxylate + 3 O2 = pyrroloquinoline quinone + 2 H2O2 + 2 H2O + H(+). It participates in cofactor biosynthesis; pyrroloquinoline quinone biosynthesis. Ring cyclization and eight-electron oxidation of 3a-(2-amino-2-carboxyethyl)-4,5-dioxo-4,5,6,7,8,9-hexahydroquinoline-7,9-dicarboxylic-acid to PQQ. The chain is Pyrroloquinoline-quinone synthase from Xanthomonas oryzae pv. oryzae (strain MAFF 311018).